Here is a 531-residue protein sequence, read N- to C-terminus: MCSLASGATGGRGAVENEEDLPELSDSGDEAAWEDEDDADLPHGKQQTPCLFCNRLFTSAEETFSHCKSEHQFNIDSMVHKHGLEFYGYIKLINFIRLKNPTVEYMNSIYNPVPWEKEEYLKPVLEDDLLLQFDVEDLYEPVSVPFSYPNGLSENTSVVEKLKHMEARALSAEAALARAREDLQKMKQFAQDFVMHTDVRTCSSSTSVIADLQEDEDGVYFSSYGHYGIHEEMLKDKIRTESYRDFIYQNPHIFKDKVVLDVGCGTGILSMFAAKAGAKKVLGVDQSEILYQAMDIIRLNKLEDTITLIKGKIEEVHLPVEKVDVIISEWMGYFLLFESMLDSVLYAKNKYLAKGGSVYPDICTISLVAVSDVNKHADRIAFWDDVYGFKMSCMKKAVIPEAVVEVLDPKTLISEPCGIKHIDCHTTSISDLEFSSDFTLKITRTSMCTAIAGYFDIYFEKNCHNRVVFSTGPQSTKTHWKQTVFLLEKPFSVKAGEALKGKVTVHKNKKDPRSLTVTLTLNNSTQTYGLQ.

The interval 1 to 43 (MCSLASGATGGRGAVENEEDLPELSDSGDEAAWEDEDDADLPH) is disordered. Residue Cys-2 is modified to N-acetylcysteine. Residues 16 to 39 (ENEEDLPELSDSGDEAAWEDEDDA) are compositionally biased toward acidic residues. Residues Ser-25 and Ser-27 each carry the phosphoserine modification. The C2H2-type zinc-finger motif lies at 48-71 (TPCLFCNRLFTSAEETFSHCKSEH). Positions 48-71 (TPCLFCNRLFTSAEETFSHCKSEH) are interaction with ZNF200. Residue Ser-171 is modified to Phosphoserine. The segment at 186–531 (MKQFAQDFVM…NNSTQTYGLQ (346 aa)) is mediates interaction with ALDH1A1. An SAM-dependent MTase PRMT-type domain is found at 217–531 (DGVYFSSYGH…NNSTQTYGLQ (315 aa)). 5 residues coordinate S-adenosyl-L-homocysteine: Arg-239, Gly-263, Asp-285, Ile-313, and Glu-314. Active-site residues include Glu-329 and Glu-338. Ser-343 provides a ligand contact to S-adenosyl-L-homocysteine.

It belongs to the class I-like SAM-binding methyltransferase superfamily. Protein arginine N-methyltransferase family. In terms of assembly, monomer and homodimer. Interacts with EPB41L3 (via FERM domain); the interaction is direct and inhibits the protein-arginine N-methyltransferase activity of PRMT3. Interacts with the 40S ribosomal protein RPS2. Interacts with ALDH1A1; the interaction is direct, inhibits ALDH1A1 aldehyde dehydrogenase activity and is independent of the methyltransferase activity of PRMT3. Interacts (via zinc-finger) with ZNF200 (via C-terminus); the interaction is direct and required to localize PRMT3 to the nucleus and inhibit its proteasomal degradation.

The protein resides in the cytoplasm. It localises to the cytosol. Its subcellular location is the nucleus. The enzyme catalyses L-arginyl-[protein] + S-adenosyl-L-methionine = N(omega)-methyl-L-arginyl-[protein] + S-adenosyl-L-homocysteine + H(+). The catalysed reaction is L-arginyl-[protein] + 2 S-adenosyl-L-methionine = N(omega),N(omega)-dimethyl-L-arginyl-[protein] + 2 S-adenosyl-L-homocysteine + 2 H(+). With respect to regulation, inhibited by N-ethylmaleimide and high concentrations of zinc chloride. Allosterically inhibited by SGC707. Allosterically inhibited by (1-(benzo[d][1,2,3]thiadiazol- 6-yl)-3-(2-cyclohexenylethyl)urea) and derivatives thereof. Its function is as follows. Protein-arginine N-methyltransferase that catalyzes both the monomethylation and asymmetric dimethylation of the guanidino nitrogens of arginine residues in target proteins, and therefore falls into the group of type I methyltransferases. Catalyzes the asymmetric arginine dimethylation at multiple sites in the Arg/Gly-rich region of small ribosomal subunit protein uS5/RPS2. Also appears to methylate other ribosomal proteins. May regulate retinoic acid synthesis and signaling by inhibiting ALDH1A1 retinal dehydrogenase activity. Contributes to methylation of histone H4 'Arg-3', a specific tag for epigenetic transcriptional activation. Mediates asymmetric arginine dimethylation of histone H4 'Arg-3' (H4R3me2a) in the promoter region of miRNA miR-3648, to promote its transcription and osteogenesis. This Homo sapiens (Human) protein is Protein arginine N-methyltransferase 3.